The chain runs to 292 residues: Protein LRATD1 (292 aa).

Ser-38 bears the Phosphoserine mark. The region spanning 133–228 (PAPEPPAPAP…CRFGKREFKA (96 aa)) is the LRAT domain.

It belongs to the LRATD family. As to expression, only detected in testis. Highly expressed in colon cancer cells.

The protein resides in the cytoplasm. May play a role in cell morphology and motility. The polypeptide is Protein LRATD1 (Homo sapiens (Human)).